The primary structure comprises 120 residues: Large ribosomal subunit protein uL18 (120 aa).

This sequence belongs to the universal ribosomal protein uL18 family. Part of the 50S ribosomal subunit; part of the 5S rRNA/L5/L18/L25 subcomplex. Contacts the 5S and 23S rRNAs.

Functionally, this is one of the proteins that bind and probably mediate the attachment of the 5S RNA into the large ribosomal subunit, where it forms part of the central protuberance. The chain is Large ribosomal subunit protein uL18 from Janthinobacterium sp. (strain Marseille) (Minibacterium massiliensis).